A 25-amino-acid chain; its full sequence is ENFSGGCVAGYMRTPDGRCKPTFYQ.

A disulfide bridge links cysteine 7 with cysteine 19. Glutamine 25 is subject to Glutamine amide.

The protein belongs to the GBP/PSP1/paralytic peptide family. As to expression, hemolymph.

Functionally, biogenic peptide that prevents, in lepidopteran, the onset of metamorphosis from larva to pupa. This growth-blocking peptide has repressive activity against juvenile hormone esterase. The protein is Growth-blocking peptide of Cotesia kariyai (Parasitic wasp).